A 755-amino-acid chain; its full sequence is Polycomb protein SUZ12 (755 aa).

3 disordered regions span residues 26–79 (KMGN…RRIS), 333–377 (NANG…SRRA), and 392–420 (AVGRETRNNSNKRRRGGAYGEDHPPSDDR). A compositionally biased stretch (low complexity) spans 30–42 (KASSQAQKRSQSQ). 2 stretches are compositionally biased toward polar residues: residues 43–57 (TGDSATSRPATDGSG) and 349–359 (TQPNGTHNEGT). Over residues 411–420 (GEDHPPSDDR) the composition is skewed to basic and acidic residues. The C2H2-type zinc-finger motif lies at 436 to 458 (FACLICGAENERLSQLRAHYMCH). Residues 580-645 (IDDSWLLLKH…KADWLVSKRS (66 aa)) are polycomb protein VEFS-Box.

It belongs to the VEFS (VRN2-EMF2-FIS2-SU(Z)12) family. Component of the polycomb repressive complex 2 (PRC2) that consists of four core subunits icluding EZH2, EED, SUZ12, and RBBP4, among which EZH2 is the catalytic subunit and which minimally requires EED and SUZ12 for catalysis.

The protein localises to the nucleus. Functionally, component of the of the Polycomb Repressive Complex 2 (PRC2), a histone H3 lysine methyltransferase responsible for generating mono-, di-, and tri-methylation on Lys27 (H3K27me1, H3K27me2 and H3K27me3). The tri-methylated form is known to be critical in gene repression, and its proper placement is essential in defining repression patterns during development. SUZ12 is not a catalytic subunit but is required for the complex regulation of histone H3 lysine methylation by EZH2. The chain is Polycomb protein SUZ12 from Chaetomium thermophilum (strain DSM 1495 / CBS 144.50 / IMI 039719) (Thermochaetoides thermophila).